The primary structure comprises 346 residues: Dihydroorotase (346 aa).

Positions 13 and 15 each coordinate Zn(2+). Residues 15–17 and asparagine 41 contribute to the substrate site; that span reads HLR. Zn(2+) is bound by residues lysine 99, histidine 136, and histidine 174. Residue lysine 99 is modified to N6-carboxylysine. Histidine 136 lines the substrate pocket. Substrate is bound at residue leucine 219. Residue aspartate 247 coordinates Zn(2+). Residue aspartate 247 is part of the active site. Residues histidine 251 and alanine 263 each coordinate substrate.

Belongs to the metallo-dependent hydrolases superfamily. DHOase family. Class II DHOase subfamily. As to quaternary structure, homodimer. The cofactor is Zn(2+).

The catalysed reaction is (S)-dihydroorotate + H2O = N-carbamoyl-L-aspartate + H(+). It participates in pyrimidine metabolism; UMP biosynthesis via de novo pathway; (S)-dihydroorotate from bicarbonate: step 3/3. Its function is as follows. Catalyzes the reversible cyclization of carbamoyl aspartate to dihydroorotate. This chain is Dihydroorotase, found in Picosynechococcus sp. (strain ATCC 27264 / PCC 7002 / PR-6) (Agmenellum quadruplicatum).